Consider the following 693-residue polypeptide: Homoaconitase, mitochondrial (693 aa).

A mitochondrion-targeting transit peptide spans 1–17 (MFRVQRLRMFSTSRALY). Residues cysteine 338, cysteine 405, and cysteine 408 each contribute to the [4Fe-4S] cluster site.

It belongs to the aconitase/IPM isomerase family. Requires [4Fe-4S] cluster as cofactor.

The protein resides in the mitochondrion. The catalysed reaction is (2R,3S)-homoisocitrate = cis-homoaconitate + H2O. It participates in amino-acid biosynthesis; L-lysine biosynthesis via AAA pathway; L-alpha-aminoadipate from 2-oxoglutarate: step 3/5. Its function is as follows. Catalyzes the reversible hydration of cis-homoaconitate to (2R,3S)-homoisocitrate, a step in the alpha-aminoadipate pathway for lysine biosynthesis. This Kluyveromyces lactis (strain ATCC 8585 / CBS 2359 / DSM 70799 / NBRC 1267 / NRRL Y-1140 / WM37) (Yeast) protein is Homoaconitase, mitochondrial (LYS4).